We begin with the raw amino-acid sequence, 467 residues long: Envelope glycoprotein M (467 aa).

Residues 1 to 32 (MGRRAPRGSPEAAPGADVAPGARAAWWVWCVQ) are Intravirion-facing. A helical membrane pass occupies residues 33–53 (VATFIVSAICVVGLLVLASVF). The Virion surface portion of the chain corresponds to 54-90 (RDRFPCLYAPATSYAKANATVEVRGGVAVPLRLDTQS). Residues 91–111 (LLATYAITSTLLLAAAVYAAV) traverse the membrane as a helical segment. The Intravirion portion of the chain corresponds to 112-137 (GAVTSRYERALDAARRLAAARMAMPH). The helical transmembrane segment at 138-158 (ATLIAGNVCAWLLQITVLLLA) threads the bilayer. The Virion surface segment spans residues 159-163 (HRISQ). A helical transmembrane segment spans residues 164 to 184 (LAHLIYVLHFACLVYLAAHFC). At 185–220 (TRGVLSGTYLRQVHGLIDPAPTHHRIVGPVRAVMTN) the chain is on the intravirion side. The helical transmembrane segment at 221 to 241 (ALLLGTLLCTAAAAVSLNTIA) threads the bilayer. Residues 242 to 250 (ALNFNFSAP) lie on the Virion surface side of the membrane. Residues 251-271 (SMLICLTTLFALLVVSLLLVV) form a helical membrane-spanning segment. The Intravirion portion of the chain corresponds to 272–280 (EGVLCHYVR). Residues 281–301 (VLVGPHLGAIAATGIVGLACE) traverse the membrane as a helical segment. Residues 302 to 318 (HYHTGGYYVVEQQWPGA) lie on the Virion surface side of the membrane. Residues 319-339 (QTGVRVALALVAAFALAMAVL) form a helical membrane-spanning segment. At 340–467 (RCTRAYLYHR…EPVYSTVRRW (128 aa)) the chain is on the intravirion side. Basic residues predominate over residues 371–381 (RRVRSSMRGSR). Disordered stretches follow at residues 371 to 395 (RRVRSSMRGSRRGGPPGDPGYAETP) and 432 to 459 (VQRPGPVPDAEPIYDTVEGYAPRSAGEP).

It belongs to the herpesviridae glycoprotein M family. In terms of assembly, interacts (via N-terminus) with gN (via N-terminus). The gM-gN heterodimer forms the gCII complex.

It localises to the virion membrane. Its subcellular location is the host Golgi apparatus. The protein localises to the host trans-Golgi network. It is found in the host endosome membrane. The protein resides in the host nucleus inner membrane. In terms of biological role, envelope glycoprotein important for virion assembly and egress. Plays a role in the correct incorporation of gH-gL into virion membrane. Directs the glycoprotein N (gN) to the host trans-Golgi network. This Human herpesvirus 2 (strain HG52) (HHV-2) protein is Envelope glycoprotein M.